Reading from the N-terminus, the 554-residue chain is Potassium-transporting ATPase potassium-binding subunit (554 aa).

A run of 12 helical transmembrane segments spans residues 3–23, 60–80, 131–151, 174–194, 252–272, 279–299, 323–343, 352–372, 375–395, 412–432, 481–501, and 522–542; these read PVLA…LAHV, PAYL…LYLL, GLAV…VALV, VRVL…CGVI, LFEI…FGIM, GYAI…LMMW, FGIG…TGAV, GLGG…PGGV, GLYG…LMVG, FAAC…AAAM, LGLA…ALAG, and LFAG…YFPA.

It belongs to the KdpA family. The system is composed of three essential subunits: KdpA, KdpB and KdpC.

It is found in the cell membrane. Part of the high-affinity ATP-driven potassium transport (or Kdp) system, which catalyzes the hydrolysis of ATP coupled with the electrogenic transport of potassium into the cytoplasm. This subunit binds the extracellular potassium ions and delivers the ions to the membrane domain of KdpB through an intramembrane tunnel. The sequence is that of Potassium-transporting ATPase potassium-binding subunit from Streptomyces coelicolor (strain ATCC BAA-471 / A3(2) / M145).